A 295-amino-acid chain; its full sequence is Glycine--tRNA ligase alpha subunit (295 aa).

It belongs to the class-II aminoacyl-tRNA synthetase family. In terms of assembly, tetramer of two alpha and two beta subunits.

It localises to the cytoplasm. It carries out the reaction tRNA(Gly) + glycine + ATP = glycyl-tRNA(Gly) + AMP + diphosphate. The protein is Glycine--tRNA ligase alpha subunit of Prochlorococcus marinus (strain MIT 9215).